The following is a 74-amino-acid chain: Sodium channel neurotoxin MeuNaTxalpha-6 (74 aa).

The first 7 residues, Leu1 to Ser7, serve as a signal peptide directing secretion. One can recognise an LCN-type CS-alpha/beta domain in the interval Arg9 to His73. 4 disulfides stabilise this stretch: Cys19–Cys72, Cys23–Cys45, Cys31–Cys55, and Cys35–Cys57. Position 74 (Arg74) is a propeptide, removed by a carboxypeptidase.

It belongs to the long (4 C-C) scorpion toxin superfamily. Sodium channel inhibitor family. Alpha subfamily. As to expression, expressed by the venom gland.

It is found in the secreted. Functionally, alpha toxins bind voltage-independently at site-3 of sodium channels (Nav) and inhibit the inactivation of the activated channels, thereby blocking neuronal transmission. This Mesobuthus eupeus (Lesser Asian scorpion) protein is Sodium channel neurotoxin MeuNaTxalpha-6.